Here is a 408-residue protein sequence, read N- to C-terminus: Peptidase T (408 aa).

His-78 provides a ligand contact to Zn(2+). Asp-80 is a catalytic residue. Asp-140 provides a ligand contact to Zn(2+). Catalysis depends on Glu-174, which acts as the Proton acceptor. Residues Glu-175, Asp-197, and His-379 each coordinate Zn(2+).

This sequence belongs to the peptidase M20B family. It depends on Zn(2+) as a cofactor.

Its subcellular location is the cytoplasm. The catalysed reaction is Release of the N-terminal residue from a tripeptide.. Functionally, cleaves the N-terminal amino acid of tripeptides. This is Peptidase T from Staphylococcus aureus (strain Mu3 / ATCC 700698).